The primary structure comprises 85 residues: uncharacterized protein (85 aa).

S22 bears the Phosphoserine mark.

It is found in the cytoplasm. It localises to the nucleus. This is an uncharacterized protein from Saccharomyces cerevisiae (strain ATCC 204508 / S288c) (Baker's yeast).